The chain runs to 86 residues: MKVLKRDSMLLLITLYFLLTTSMARQDPFLVGVEKDVVPAGTDLKQNKAKPHLPNLFRTMRRVPTGPNPLHHISPPQPGSLNYARN.

The signal sequence occupies residues 1–24; it reads MKVLKRDSMLLLITLYFLLTTSMA. The disordered stretch occupies residues 43-86; it reads DLKQNKAKPHLPNLFRTMRRVPTGPNPLHHISPPQPGSLNYARN. P64 and P67 each carry hydroxyproline. P67 is a glycosylation site (O-linked (Ara...) hydroxyproline).

The protein belongs to the CLV3/ESR signal peptide family. In terms of processing, the O-glycosylation (arabinosylation) of the hydroxyproline Pro-67 enhances binding affinity of the CLE8p peptide for its receptor. In terms of tissue distribution, mostly expressed in siliques, and, to a lower extent, in flowers. Expressed in young embryos and endosperm.

The protein localises to the secreted. The protein resides in the extracellular space. In terms of biological role, extracellular signal peptide that regulates cell fate. Represses root apical meristem maintenance. Positively regulates the expression of the transcription factor WOX8 and thus, regulates early embryo development. Regulates the transition of protophloem cells from proliferation to differentiation, thus impinging on postembryonic growth capacity of the root meristem; this signaling pathway requires CRN and CLV2. In Arabidopsis thaliana (Mouse-ear cress), this protein is CLAVATA3/ESR (CLE)-related protein 8.